The primary structure comprises 717 residues: Polyribonucleotide nucleotidyltransferase (717 aa).

2 residues coordinate Mg(2+): D486 and D492. The KH domain maps to 553–612; the sequence is PRMITVKINPEKIRDVIGKGGSTIQALTKETGCTIDIQEDGTITIASTSSEGMAEAKRRI. The region spanning 622–690 is the S1 motif domain; that stretch reads GKIYSGTVLK…EKGRMRLSIK (69 aa). The disordered stretch occupies residues 690–717; that stretch reads KAAKAEEGDVPATAPQAPGAGDATSQQQ.

Belongs to the polyribonucleotide nucleotidyltransferase family. The cofactor is Mg(2+).

Its subcellular location is the cytoplasm. It catalyses the reaction RNA(n+1) + phosphate = RNA(n) + a ribonucleoside 5'-diphosphate. Functionally, involved in mRNA degradation. Catalyzes the phosphorolysis of single-stranded polyribonucleotides processively in the 3'- to 5'-direction. The polypeptide is Polyribonucleotide nucleotidyltransferase (Ralstonia nicotianae (strain ATCC BAA-1114 / GMI1000) (Ralstonia solanacearum)).